Reading from the N-terminus, the 87-residue chain is Small ribosomal subunit protein bS16 (87 aa).

This sequence belongs to the bacterial ribosomal protein bS16 family.

The sequence is that of Small ribosomal subunit protein bS16 from Variovorax paradoxus (strain S110).